The sequence spans 260 residues: Hydroxyethylthiazole kinase 1 (260 aa).

Met39 is a binding site for substrate. 2 residues coordinate ATP: Arg115 and Thr160. Substrate is bound at residue Gly187.

It belongs to the Thz kinase family. Mg(2+) is required as a cofactor.

It carries out the reaction 5-(2-hydroxyethyl)-4-methylthiazole + ATP = 4-methyl-5-(2-phosphooxyethyl)-thiazole + ADP + H(+). It participates in cofactor biosynthesis; thiamine diphosphate biosynthesis; 4-methyl-5-(2-phosphoethyl)-thiazole from 5-(2-hydroxyethyl)-4-methylthiazole: step 1/1. Functionally, catalyzes the phosphorylation of the hydroxyl group of 4-methyl-5-beta-hydroxyethylthiazole (THZ). This chain is Hydroxyethylthiazole kinase 1, found in Streptococcus pneumoniae (strain ATCC 700669 / Spain 23F-1).